A 101-amino-acid polypeptide reads, in one-letter code: uncharacterized protein (101 aa).

This is an uncharacterized protein from Homo sapiens (Human).